The sequence spans 125 residues: Fumarate reductase subunit D (125 aa).

Helical transmembrane passes span 30 to 50, 60 to 80, and 105 to 125; these read FAMI…MGVI, VVSF…LALP, and IACY…IFML.

It belongs to the FrdD family. Part of an enzyme complex containing four subunits: a flavoprotein (FrdA), an iron-sulfur protein (FrdB), and two hydrophobic anchor proteins (FrdC and FrdD).

It localises to the cell inner membrane. Its function is as follows. Anchors the catalytic components of the fumarate reductase complex to the cell membrane, binds quinones. The polypeptide is Fumarate reductase subunit D (Vibrio vulnificus (strain YJ016)).